Reading from the N-terminus, the 313-residue chain is Ribosomal RNA small subunit methyltransferase H (313 aa).

Residues 35–37 (GGH), Asp-55, Phe-81, Asp-103, and Gln-110 contribute to the S-adenosyl-L-methionine site.

Belongs to the methyltransferase superfamily. RsmH family.

Its subcellular location is the cytoplasm. The catalysed reaction is cytidine(1402) in 16S rRNA + S-adenosyl-L-methionine = N(4)-methylcytidine(1402) in 16S rRNA + S-adenosyl-L-homocysteine + H(+). Functionally, specifically methylates the N4 position of cytidine in position 1402 (C1402) of 16S rRNA. The chain is Ribosomal RNA small subunit methyltransferase H from Pseudomonas syringae pv. tomato (strain ATCC BAA-871 / DC3000).